The chain runs to 266 residues: ATP synthase subunit a (266 aa).

Helical transmembrane passes span 28 to 48, 88 to 108, 141 to 161, 206 to 226, and 237 to 257; these read SINVDSMFFSIALGILFLVIF, LIAPLALTIFVWVFLMNLMDL, DVNITLSMALGVFILVLFYSI, LFGNMYAGELIFILIAGLLPW, and AIFHILIITLQAFIFMVLTVV.

It belongs to the ATPase A chain family. As to quaternary structure, F-type ATPases have 2 components, CF(1) - the catalytic core - and CF(0) - the membrane proton channel. CF(1) has five subunits: alpha(3), beta(3), gamma(1), delta(1), epsilon(1). CF(0) has three main subunits: a(1), b(2) and c(9-12). The alpha and beta chains form an alternating ring which encloses part of the gamma chain. CF(1) is attached to CF(0) by a central stalk formed by the gamma and epsilon chains, while a peripheral stalk is formed by the delta and b chains.

It is found in the cell inner membrane. In terms of biological role, key component of the proton channel; it plays a direct role in the translocation of protons across the membrane. In Pectobacterium carotovorum subsp. carotovorum (strain PC1), this protein is ATP synthase subunit a.